We begin with the raw amino-acid sequence, 378 residues long: Glutamate 5-kinase (378 aa).

ATP is bound at residue Lys14. Substrate is bound by residues Ser54, Asp141, and Asn153. 173–174 (SD) contacts ATP. The PUA domain maps to 279–356 (AGRLTVDAGA…DEISAILGYD (78 aa)).

Belongs to the glutamate 5-kinase family.

It localises to the cytoplasm. It catalyses the reaction L-glutamate + ATP = L-glutamyl 5-phosphate + ADP. It participates in amino-acid biosynthesis; L-proline biosynthesis; L-glutamate 5-semialdehyde from L-glutamate: step 1/2. In terms of biological role, catalyzes the transfer of a phosphate group to glutamate to form L-glutamate 5-phosphate. The polypeptide is Glutamate 5-kinase (Brucella abortus (strain S19)).